The chain runs to 1238 residues: Cullin-associated NEDD8-dissociated protein 1 (1238 aa).

5 HEAT repeats span residues 41-78 (TYEN…RVKD), 126-167 (LVIK…KYGS), 171-208 (GDLE…PSPD), 210-247 (LFNS…SSGY), and 251-292 (KYLP…KCQK). The tract at residues 315–354 (YSDDGEGEEDGDEEEEEMETSGDNDEEQEEEEEEEDLSDD) is disordered. HEAT repeat units follow at residues 382–419 (ELYQ…QLNK), 432–469 (QQVP…IIPG), 603–641 (EIQS…SSIN), 646–683 (SILP…VCPN), 688–725 (SLLT…NYSE), 853–890 (HENE…CSLQ), 933–966 (PFLQ…KLSM), 967–1004 (IEPN…ENKE), and 1008–1045 (QYLA…NKPN).

This sequence belongs to the CAND family.

It localises to the nucleus. Its function is as follows. Key assembly factor of SCF (SKP1-CUL1-F-box protein) E3 ubiquitin ligase complexes that promotes the exchange of the substrate-recognition F-box subunit in SCF complexes, thereby playing a key role in the cellular repertoire of SCF complexes. Acts as a F-box protein exchange factor. This is Cullin-associated NEDD8-dissociated protein 1 (cand1) from Dictyostelium discoideum (Social amoeba).